The primary structure comprises 317 residues: Adenine deaminase (317 aa).

Residues histidine 14, histidine 16, and histidine 194 each contribute to the Zn(2+) site. Glutamate 197 functions as the Proton donor in the catalytic mechanism. Residue aspartate 275 participates in Zn(2+) binding. Aspartate 276 is a binding site for substrate.

This sequence belongs to the metallo-dependent hydrolases superfamily. Adenosine and AMP deaminases family. Adenine deaminase type 2 subfamily. Zn(2+) serves as cofactor.

It carries out the reaction adenine + H2O + H(+) = hypoxanthine + NH4(+). Its function is as follows. Catalyzes the hydrolytic deamination of adenine to hypoxanthine. Plays an important role in the purine salvage pathway and in nitrogen catabolism. The sequence is that of Adenine deaminase from Pseudomonas savastanoi pv. phaseolicola (strain 1448A / Race 6) (Pseudomonas syringae pv. phaseolicola (strain 1448A / Race 6)).